The primary structure comprises 28 residues: RWDVDQCIYYCLNGVVGYSYTECQTMCT.

2 disulfide bridges follow: cysteine 7–cysteine 27 and cysteine 11–cysteine 23.

It belongs to the conotoxin L superfamily. As to expression, expressed by the venom duct.

Its subcellular location is the secreted. In terms of biological role, in vivo, intracranial injection elicits scratching and grooming activity in mice, and causes body and rear limb extension and tail curling immediately upon injection. This is Conotoxin as14b from Conus cancellatus (Cancellate cone).